The primary structure comprises 284 residues: UPF0276 protein Ping_0944 (284 aa).

The protein belongs to the UPF0276 family.

This Psychromonas ingrahamii (strain DSM 17664 / CCUG 51855 / 37) protein is UPF0276 protein Ping_0944.